The following is a 328-amino-acid chain: Isopenicillin N synthase (328 aa).

Residues R85, Y89, S181, and Y187 each coordinate isopenicillin N. R85, Y89, S181, Y187, H210, and D212 together coordinate N-[(5S)-5-amino-5-carboxypentanoyl]-L-cysteinyl-D-valine. A Fe2OG dioxygenase domain is found at 178–284 (TLSSVSLIRY…RLSLPFFFHA (107 aa)). Residues H210, D212, and H266 each contribute to the Fe(2+) site. Position 275 (R275) interacts with 2-oxoglutarate. S277 contacts isopenicillin N. S277 provides a ligand contact to N-[(5S)-5-amino-5-carboxypentanoyl]-L-cysteinyl-D-valine.

This sequence belongs to the iron/ascorbate-dependent oxidoreductase family. Fe cation is required as a cofactor. Requires L-ascorbate as cofactor.

It catalyses the reaction N-[(5S)-5-amino-5-carboxypentanoyl]-L-cysteinyl-D-valine + O2 = isopenicillin N + 2 H2O. Its pathway is antibiotic biosynthesis; penicillin G biosynthesis; penicillin G from L-alpha-aminoadipate and L-cysteine and L-valine: step 2/3. In terms of biological role, removes, in the presence of oxygen, 4 hydrogen atoms from delta-L-(alpha-aminoadipyl)-L-cysteinyl-D-valine (ACV) to form the azetidinone and thiazolidine rings of isopenicillin. This chain is Isopenicillin N synthase (pcbC), found in Amycolatopsis lactamdurans (Nocardia lactamdurans).